A 332-amino-acid chain; its full sequence is Autoinducer 2 import system permease protein LsrD (332 aa).

The next 10 membrane-spanning stretches (helical) occupy residues 7–27 (YSWE…FGLI), 45–65 (ICIG…GMDI), 70–90 (TIGL…PLPL), 91–111 (AIII…GLII), 118–138 (LVIT…LSGM), 162–182 (FLGI…FWLL), 216–236 (VYAM…SYFG), 240–260 (SDLG…GGAN), 261–281 (IYGG…VGFL), and 288–308 (AGVP…VVVV).

This sequence belongs to the binding-protein-dependent transport system permease family. AraH/RbsC subfamily. In terms of assembly, the complex is composed of two ATP-binding proteins (LsrA), two transmembrane proteins (LsrC and LsrD) and a solute-binding protein (LsrB).

The protein localises to the cell inner membrane. Its function is as follows. Part of the ABC transporter complex LsrABCD involved in autoinducer 2 (AI-2) import. Probably responsible for the translocation of the substrate across the membrane. The sequence is that of Autoinducer 2 import system permease protein LsrD (lsrD) from Salmonella paratyphi B (strain ATCC BAA-1250 / SPB7).